The primary structure comprises 635 residues: Dual specificity protein kinase zak2 (635 aa).

2 consecutive Protein kinase domains span residues 9-249 and 299-585; these read WEEI…HRLI and NKDD…QIYF. Residues 15 to 23 and Lys-45 each bind ATP; that span reads IGSCNSKSR. The active-site Proton acceptor is Asp-124. ATP contacts are provided by residues 305 to 313 and Lys-326; that span reads GGDGFFSVV. The Proton acceptor role is filled by Asp-427.

It in the N-terminal section; belongs to the protein kinase superfamily. Ser/Thr protein kinase family. In the C-terminal section; belongs to the protein kinase superfamily. TKL Tyr protein kinase family. Post-translationally, C-terminal tyrosine kinase domain is capable of autophosphorylation, in vitro. In terms of tissue distribution, zakA and zak2 are coexpressed in prestalk cell population, zakA is enriched in pstB populations and zak1 in pstA populations. ZakA and zak2 are coexpressed in prespore cells, zakA expression levels are 10 fold higher than zak2.

It catalyses the reaction L-seryl-[protein] + ATP = O-phospho-L-seryl-[protein] + ADP + H(+). The catalysed reaction is L-threonyl-[protein] + ATP = O-phospho-L-threonyl-[protein] + ADP + H(+). It carries out the reaction L-tyrosyl-[protein] + ATP = O-phospho-L-tyrosyl-[protein] + ADP + H(+). In terms of biological role, positive regulator of gsk3/gskA activity required for cell pattern formation and a downstream effector of carC. The kinases, gsk3/gskA, zakA and zak2, form part of a signaling pathway that responds to extracellular cyclic AMP. The pathway has a role in transcriptional regulation; required to direct prespore/spore fates during development. Zak2 negatively regulates prestalk differentiation by regulating expression of ecmA. Phosphorylates Y-214 of gsk3/gskA, in vitro. This Dictyostelium discoideum (Social amoeba) protein is Dual specificity protein kinase zak2 (zak2).